The following is a 509-amino-acid chain: Maturase K (509 aa).

This sequence belongs to the intron maturase 2 family. MatK subfamily.

The protein localises to the plastid. The protein resides in the chloroplast. Functionally, usually encoded in the trnK tRNA gene intron. Probably assists in splicing its own and other chloroplast group II introns. This chain is Maturase K, found in Clematis florida (Asian virgin's bower).